Reading from the N-terminus, the 286-residue chain is Putative type II secretion system L-type protein YghE (286 aa).

Residues 136-156 (VMILPILLILVALAVERGVTL) form a helical membrane-spanning segment.

It belongs to the GSP L family.

The protein resides in the cell inner membrane. In terms of biological role, involved in a type II secretion system (T2SS, formerly general secretion pathway, GSP) for the export of folded proteins across the outer membrane. This is Putative type II secretion system L-type protein YghE from Escherichia coli (strain K12).